The primary structure comprises 1530 residues: Multidrug resistance-associated protein 1 (1530 aa).

Over Met1–Phe33 the chain is Extracellular. A glycan (N-linked (GlcNAc...) asparagine) is linked at Asn19. Residues Gln34 to Phe54 form a helical membrane-spanning segment. Residues Leu55–Lys74 are Cytoplasmic-facing. A helical transmembrane segment spans residues Thr75–Glu95. At Arg96–Lys100 the chain is on the extracellular side. A helical transmembrane segment spans residues Leu101–Thr121. Residues Phe122–Gln133 are Cytoplasmic-facing. Residues Ser134 to Arg154 form a helical membrane-spanning segment. The Extracellular portion of the chain corresponds to Ser155–Asp172. Residues Val173–Asp193 traverse the membrane as a helical segment. Residues Arg194–Val316 lie on the Cytoplasmic side of the membrane. Tyr277 carries the post-translational modification Phosphotyrosine. Ser289 carries the phosphoserine modification. Residues Leu317–Leu337 form a helical membrane-spanning segment. The region spanning Phe325–Gln608 is the ABC transmembrane type-1 1 domain. Over Met338 to Gly363 the chain is Extracellular. The helical transmembrane segment at Tyr364–Tyr384 threads the bilayer. Over Phe385 to Tyr440 the chain is Cytoplasmic. A helical membrane pass occupies residues Ile441 to Asn461. Residues Leu462–Pro464 are Extracellular-facing. A helical membrane pass occupies residues Ser465 to Met485. Residues Lys486–Ala547 lie on the Cytoplasmic side of the membrane. Lys503 is subject to N6-succinyllysine. Residues Val548–Tyr568 traverse the membrane as a helical segment. The Extracellular segment spans residues Val569–Asn590. Residues Ile591–Val611 traverse the membrane as a helical segment. Residues Ser612–Met966 are Cytoplasmic-facing. The ABC transporter 1 domain maps to Ile644–Thr868. Gly678–Ser685 is an ATP binding site. Residues Arg912 to Pro939 are disordered. 2 positions are modified to phosphoserine: Ser915 and Ser930. The chain crosses the membrane as a helical span at residues Lys967–Ala987. Positions Ser974–Thr1255 constitute an ABC transmembrane type-1 2 domain. Topologically, residues Ser988 to Ser1024 are extracellular. N-linked (GlcNAc...) asparagine glycosylation occurs at Asn1005. A helical transmembrane segment spans residues Gln1025 to Arg1045. The Cytoplasmic segment spans residues Arg1046 to Gln1088. A helical transmembrane segment spans residues Val1089–Leu1109. Residue Ala1110 is a topological domain, extracellular. The helical transmembrane segment at Thr1111 to Phe1131 threads the bilayer. The Cytoplasmic segment spans residues Tyr1132–Leu1202. Residues Glu1203 to Ser1223 form a helical membrane-spanning segment. Over Leu1224–Ser1225 the chain is Extracellular. The helical transmembrane segment at Ala1226 to Leu1246 threads the bilayer. Residues Val1247–Val1530 are Cytoplasmic-facing. Residues Val1292 to Asp1526 enclose the ABC transporter 2 domain. Gly1326–Ser1333 contacts ATP.

This sequence belongs to the ABC transporter superfamily. ABCC family. Conjugate transporter (TC 3.A.1.208) subfamily. As to expression, expressed in heart, spleen, lung, kidney, skeletal muscle, mammary gland and weaker in brain and liver.

The protein resides in the cell membrane. It is found in the basolateral cell membrane. The catalysed reaction is ATP + H2O + xenobioticSide 1 = ADP + phosphate + xenobioticSide 2.. It catalyses the reaction an S-substituted glutathione(in) + ATP + H2O = an S-substituted glutathione(out) + ADP + phosphate + H(+). The enzyme catalyses sphing-4-enine 1-phosphate(in) + ATP + H2O = sphing-4-enine 1-phosphate(out) + ADP + phosphate + H(+). It carries out the reaction leukotriene C4(in) + ATP + H2O = leukotriene C4(out) + ADP + phosphate + H(+). The catalysed reaction is 17beta-estradiol 17-O-(beta-D-glucuronate)(in) + ATP + H2O = 17beta-estradiol 17-O-(beta-D-glucuronate)(out) + ADP + phosphate + H(+). It catalyses the reaction daunorubicin(in) + ATP + H2O = daunorubicin(out) + ADP + phosphate + H(+). The enzyme catalyses vincristine(in) + ATP + H2O = vincristine(out) + ADP + phosphate + H(+). It carries out the reaction 2',3'-cGAMP(in) + ATP + H2O = 2',3'-cGAMP(out) + ADP + phosphate + H(+). The catalysed reaction is S-[(2E,6E,10E)-geranylgeranyl]-L-glutathione(in) + ATP + H2O = S-[(2E,6E,10E)-geranylgeranyl]-L-glutathione(out) + ADP + phosphate + H(+). It catalyses the reaction prostaglandin A2-S-(R)-glutathione(in) + ATP + H2O = prostaglandin A2-S-(R)-glutathione(out) + ADP + phosphate + H(+). The enzyme catalyses prostaglandin A2-S-(S)-glutathione(in) + ATP + H2O = prostaglandin A2-S-(S)-glutathione(out) + ADP + phosphate + H(+). With respect to regulation, MK 571 inhibits sphingosine 1-phosphate and leukotriene C4 export. In terms of biological role, mediates export of organic anions and drugs from the cytoplasm. Mediates ATP-dependent transport of glutathione and glutathione conjugates, leukotriene C4, estradiol-17-beta-o-glucuronide, methotrexate, antiviral drugs and other xenobiotics. Confers resistance to anticancer drugs by decreasing accumulation of drug in cells, and by mediating ATP- and GSH-dependent drug export. Hydrolyzes ATP with low efficiency. Catalyzes the export of sphingosine 1-phosphate from mast cells independently of their degranulation. Participates in inflammatory response by allowing export of leukotriene C4 from leukotriene C4-synthesizing cells. Mediates ATP-dependent, GSH-independent cyclic GMP-AMP (cGAMP) export. Thus, by limiting intracellular cGAMP concentrations negatively regulates the cGAS-STING pathway. Exports S-geranylgeranyl-glutathione (GGG) in lymphoid cells and stromal compartments of lymphoid organs. ABCC1 (via extracellular transport) with GGT5 (via GGG catabolism) establish GGG gradients within lymphoid tissues to position P2RY8-positive lymphocytes at germinal centers in lymphoid follicles and restrict their chemotactic transmigration from blood vessels to the bone marrow parenchyma. Mediates basolateral export of GSH-conjugated R- and S-prostaglandin A2 diastereomers in polarized epithelial cells. This is Multidrug resistance-associated protein 1 from Bos taurus (Bovine).